The following is a 349-amino-acid chain: ATPase GET3 (349 aa).

26–33 (KGGVGKTT) contacts ATP. The active site involves Asp-57. 2 residues coordinate ATP: Glu-240 and Asn-267. The Zn(2+) site is built by Cys-280 and Cys-283.

Belongs to the arsA ATPase family. Homodimer. Component of the Golgi to ER traffic (GET) complex, which is composed of GET1, GET2 and GET3. Within the complex, GET1 and GET2 form a heterotetramer which is stabilized by phosphatidylinositol binding and which binds to the GET3 homodimer. Interacts with the chloride channel protein GEF1.

The protein resides in the cytoplasm. It is found in the endoplasmic reticulum. The protein localises to the golgi apparatus. Its function is as follows. ATPase required for the post-translational delivery of tail-anchored (TA) proteins to the endoplasmic reticulum. Recognizes and selectively binds the transmembrane domain of TA proteins in the cytosol. This complex then targets to the endoplasmic reticulum by membrane-bound receptors GET1 and GET2, where the tail-anchored protein is released for insertion. This process is regulated by ATP binding and hydrolysis. ATP binding drives the homodimer towards the closed dimer state, facilitating recognition of newly synthesized TA membrane proteins. ATP hydrolysis is required for insertion. Subsequently, the homodimer reverts towards the open dimer state, lowering its affinity for the GET1-GET2 receptor, and returning it to the cytosol to initiate a new round of targeting. Cooperates with the HDEL receptor ERD2 to mediate the ATP-dependent retrieval of resident ER proteins that contain a C-terminal H-D-E-L retention signal from the Golgi to the ER. Involved in low-level resistance to the oxyanions arsenite and arsenate, and in heat tolerance. This Kluyveromyces lactis (strain ATCC 8585 / CBS 2359 / DSM 70799 / NBRC 1267 / NRRL Y-1140 / WM37) (Yeast) protein is ATPase GET3.